A 1293-amino-acid polypeptide reads, in one-letter code: Phosphoribosylformylglycinamidine synthase (1293 aa).

Residues 305–316 (GAATGSGGEIRD) and alanine 676 contribute to the ATP site. The tract at residues 305-327 (GAATGSGGEIRDEGATGRGSKPK) is disordered. 4 residues coordinate Mg(2+): aspartate 677, glutamate 716, asparagine 720, and aspartate 884. Serine 886 lines the ATP pocket. A Glutamine amidotransferase type-1 domain is found at 1040–1293 (MAILREQGVN…MFRNARVNLG (254 aa)). The Nucleophile role is filled by cysteine 1133. Catalysis depends on residues histidine 1258 and glutamate 1260.

In the N-terminal section; belongs to the FGAMS family. Monomer.

Its subcellular location is the cytoplasm. The enzyme catalyses N(2)-formyl-N(1)-(5-phospho-beta-D-ribosyl)glycinamide + L-glutamine + ATP + H2O = 2-formamido-N(1)-(5-O-phospho-beta-D-ribosyl)acetamidine + L-glutamate + ADP + phosphate + H(+). It functions in the pathway purine metabolism; IMP biosynthesis via de novo pathway; 5-amino-1-(5-phospho-D-ribosyl)imidazole from N(2)-formyl-N(1)-(5-phospho-D-ribosyl)glycinamide: step 1/2. In terms of biological role, phosphoribosylformylglycinamidine synthase involved in the purines biosynthetic pathway. Catalyzes the ATP-dependent conversion of formylglycinamide ribonucleotide (FGAR) and glutamine to yield formylglycinamidine ribonucleotide (FGAM) and glutamate. The chain is Phosphoribosylformylglycinamidine synthase from Shewanella sp. (strain MR-4).